The following is a 71-amino-acid chain: IRCFITPDITSKDCPNGHVCYTKTWCDGFCSIRGKRVDLGCAATCPTVRTGVDIQCCSTDDCDPFPTRKRP.

Cystine bridges form between cysteine 3-cysteine 20, cysteine 14-cysteine 41, cysteine 26-cysteine 30, cysteine 45-cysteine 56, and cysteine 57-cysteine 62.

This sequence belongs to the three-finger toxin family. Long-chain subfamily. Type II alpha-neurotoxin sub-subfamily. Expressed by the venom gland.

Its subcellular location is the secreted. Binds with high affinity to muscular (alpha-1/CHRNA1) and neuronal (alpha-7/CHRNA7) nicotinic acetylcholine receptor (nAChR) and inhibits acetylcholine from binding to the receptor, thereby impairing neuromuscular and neuronal transmission. The chain is Long neurotoxin 1 from Naja naja (Indian cobra).